The following is a 344-amino-acid chain: Sulfate/thiosulfate import ATP-binding protein CysA (344 aa).

An ABC transporter domain is found at 3-233; that stretch reads ILIDNVSKNF…PESAFVMSFL (231 aa). 35–42 lines the ATP pocket; sequence GPSGCGKS.

It belongs to the ABC transporter superfamily. Sulfate/tungstate importer (TC 3.A.1.6) family. The complex is composed of two ATP-binding proteins (CysA), two transmembrane proteins (CysT and CysW) and a solute-binding protein (CysP).

It localises to the cell inner membrane. It catalyses the reaction sulfate(out) + ATP + H2O = sulfate(in) + ADP + phosphate + H(+). It carries out the reaction thiosulfate(out) + ATP + H2O = thiosulfate(in) + ADP + phosphate + H(+). Part of the ABC transporter complex CysAWTP involved in sulfate/thiosulfate import. Responsible for energy coupling to the transport system. In Gloeobacter violaceus (strain ATCC 29082 / PCC 7421), this protein is Sulfate/thiosulfate import ATP-binding protein CysA.